A 225-amino-acid chain; its full sequence is MEQHTIITIDGPAGVGKSTLAKKLGTILNLPYLDTGAMFRKLALQLGNKAETLPDSILQEQCKKVTFQLQGVGKNSLLMCNGESIGHEIRSETAGILAAQLGERTIIREYLKNIEQQIGNTMSIIAEGRDLGTEVFPKAQFKFFIDANPIIRAQRRFNQLKKEGIFQDYNDILHSINYRDKLDKNRTIAPLEPAKDAILIDSSIMDIDSILKIMLNYITIPHLSQ.

Residue 11 to 19 participates in ATP binding; sequence GPAGVGKST.

It belongs to the cytidylate kinase family. Type 1 subfamily.

Its subcellular location is the cytoplasm. It carries out the reaction CMP + ATP = CDP + ADP. It catalyses the reaction dCMP + ATP = dCDP + ADP. The polypeptide is Cytidylate kinase (Lawsonia intracellularis (strain PHE/MN1-00)).